A 486-amino-acid polypeptide reads, in one-letter code: Palmitoyltransferase pfa5 (486 aa).

2 helical membrane passes run 12–32 (AVARVIPVVLFGIIIYSCYVI) and 54–74 (VGAGAAILVVFYILLLFVIIT). Residues 94-130 (AADQQSTPAKRSKSRSRRKGHGHGHRKSKSDEVSDKP) form a disordered region. Residues 103–121 (KRSKSRSRRKGHGHGHRKS) show a composition bias toward basic residues. One can recognise a DHHC domain in the interval 172–222 (IYCSKCCHYKPDRTHHCREVDRCVRKMDHFCPWVGGVVSETSFKFFIQFVF). 2 helical membrane passes run 217–237 (FIQFVFYTALFCMTVLIVCAI) and 261–281 (LVMLTLIGLSDSLQLAAFNLT). Disordered stretches follow at residues 326 to 357 (PVPPPLSGMPTQPATGEGDNPYSPPPVPSTDP) and 433 to 486 (KDAA…TGTT). Residues 447–456 (SSYNSSPSAP) show a composition bias toward low complexity. A compositionally biased stretch (basic residues) spans 460-480 (RSKRKQKRGKHHHHHHHHRHS).

Belongs to the DHHC palmitoyltransferase family. PFA5 subfamily. Autopalmitoylated.

The protein localises to the membrane. The catalysed reaction is L-cysteinyl-[protein] + hexadecanoyl-CoA = S-hexadecanoyl-L-cysteinyl-[protein] + CoA. In Emericella nidulans (strain FGSC A4 / ATCC 38163 / CBS 112.46 / NRRL 194 / M139) (Aspergillus nidulans), this protein is Palmitoyltransferase pfa5 (pfa5).